The sequence spans 694 residues: Soluble starch synthase 2-2, chloroplastic/amyloplastic (694 aa).

The transit peptide at 1–15 directs the protein to the chloroplast; it reads MSGAIASSPAATLFL. A disordered region spans residues 93–197; sequence KADHVEDSVS…DSENKESGPL (105 aa). The segment covering 127–142 has biased composition (low complexity); that stretch reads APVSKPKVDPSVPASK. A compositionally biased stretch (basic and acidic residues) spans 156 to 176; that stretch reads AALDKKEDVGVAEPLEAKADA. Residues 177–186 are compositionally biased toward low complexity; the sequence is GGDAGAVSSA. Position 217 (K217) interacts with ADP-alpha-D-glucose.

The protein belongs to the glycosyltransferase 1 family. Bacterial/plant glycogen synthase subfamily. Expressed in leaves and weakly in endosperm and roots.

Its subcellular location is the plastid. The protein localises to the amyloplast. The protein resides in the chloroplast. The enzyme catalyses [(1-&gt;4)-alpha-D-glucosyl](n) + ADP-alpha-D-glucose = [(1-&gt;4)-alpha-D-glucosyl](n+1) + ADP + H(+). It participates in glycan biosynthesis; starch biosynthesis. In terms of biological role, may contribute to the deposition of transient starch in chloroplasts of leaves. The protein is Soluble starch synthase 2-2, chloroplastic/amyloplastic (SSII-2) of Oryza sativa subsp. japonica (Rice).